Consider the following 155-residue polypeptide: Ribosome maturation factor RimP (155 aa).

Belongs to the RimP family.

It localises to the cytoplasm. Its function is as follows. Required for maturation of 30S ribosomal subunits. The protein is Ribosome maturation factor RimP of Macrococcus caseolyticus (strain JCSC5402) (Macrococcoides caseolyticum).